The primary structure comprises 295 residues: Protease HtpX homolog (295 aa).

2 helical membrane-spanning segments follow: residues 6–26 (IGLF…VTSV) and 40–60 (LSSL…VSLL). Zn(2+) is bound at residue H148. E149 is an active-site residue. A Zn(2+)-binding site is contributed by H152. Transmembrane regions (helical) follow at residues 163 to 183 (LIQG…SYAL) and 198 to 218 (ISNI…VAYF). A Zn(2+)-binding site is contributed by E223.

The protein belongs to the peptidase M48B family. Zn(2+) is required as a cofactor.

Its subcellular location is the cell inner membrane. This chain is Protease HtpX homolog, found in Leptospira borgpetersenii serovar Hardjo-bovis (strain JB197).